The following is a 593-amino-acid chain: F-box/LRR-repeat protein 17 (593 aa).

An F-box domain is found at 120 to 177 (DLDLQLDTDIVQPGRFHAVGLWEVLKRLPPSSLLMAARVCKGWRETSRKMWKAAEELR). 9 LRR repeats span residues 178-206 (IRVPERAQIGYIGSLLQKCPRLIRLSLKI), 207-232 (ESDFDATTLACIAFSCPNLEVLEITT), 237-262 (VNRISGDELSRFVANKRGLTSLKMEG), 276-304 (LSTLWLSDLHSLSKMIFNCPNLTEISLEF), 335-361 (SLKLSHTVVLSLTAVNFRYLRMLSLVL), 362-387 (GINITDASVAAISSGYKNLELLDLSG), 414-439 (CPNITSSGIQFATAQLPLLELMDCGM), 477-502 (LSLWGCSSLDALFLNCPELMDLNLNL), and 503-525 (CSNLHPESLVLQCPKLQLVYASG).

Part of a SCF (ASK-cullin-F-box) protein ligase complex. Interacts with SKP1A/ASK1, KRP4, KRP6 and KRP7. In terms of tissue distribution, expressed in developing pollen.

Its subcellular location is the nucleus. The protein operates within protein modification; protein ubiquitination. In terms of biological role, essential protein for male fertility. Component of the SCF(ASK-cullin-F-box) E3 ubiquitin ligase complex SCF(FBL17), which mediates the ubiquitination and subsequent proteasomal degradation of target proteins. Enables the switch in cell cycle control leading to male germ cell lineage formation from microspores after meiosis. Targets CDKA-1 inhibitors the degradation specifically in male germ cells (e.g. KRP6 and KRP7) and thus enables CDKA-1 activation and germ cell S-phase progression. Promotes twin sperm cell production and double fertilization. This Arabidopsis thaliana (Mouse-ear cress) protein is F-box/LRR-repeat protein 17 (FBL17).